Here is a 124-residue protein sequence, read N- to C-terminus: Glycine cleavage system H protein (124 aa).

The Lipoyl-binding domain maps to 22 to 104 (LVITGITDHA…YGKGWIYKIK (83 aa)). Lys-63 is modified (N6-lipoyllysine).

The protein belongs to the GcvH family. The glycine cleavage system is composed of four proteins: P, T, L and H. It depends on (R)-lipoate as a cofactor.

The glycine cleavage system catalyzes the degradation of glycine. The H protein shuttles the methylamine group of glycine from the P protein to the T protein. This Acinetobacter baumannii (strain ACICU) protein is Glycine cleavage system H protein.